Here is a 664-residue protein sequence, read N- to C-terminus: DNA topoisomerase 4 subunit B (664 aa).

ATP is bound by residues tyrosine 7, asparagine 47, aspartate 74, 114–120 (GLHGVGA), and lysine 341. A disordered region spans residues 386–418 (REAARKAREDARSGKKNKRKDTLLSGKLTPAQS). Over residues 387–398 (EAARKAREDARS) the composition is skewed to basic and acidic residues. The Toprim domain maps to 424-538 (NELYLVEGDS…AGRVFIALPP (115 aa)). Residues glutamate 430, aspartate 503, and aspartate 505 each contribute to the Mg(2+) site.

This sequence belongs to the type II topoisomerase family. ParE type 2 subfamily. In terms of assembly, heterotetramer composed of ParC and ParE. Mg(2+) serves as cofactor. Mn(2+) is required as a cofactor. Requires Ca(2+) as cofactor.

The catalysed reaction is ATP-dependent breakage, passage and rejoining of double-stranded DNA.. Functionally, topoisomerase IV is essential for chromosome segregation. It relaxes supercoiled DNA. Performs the decatenation events required during the replication of a circular DNA molecule. This Staphylococcus epidermidis (strain ATCC 35984 / DSM 28319 / BCRC 17069 / CCUG 31568 / BM 3577 / RP62A) protein is DNA topoisomerase 4 subunit B.